A 1255-amino-acid polypeptide reads, in one-letter code: DNA-directed RNA polymerase subunit beta' (1255 aa).

4 residues coordinate Zn(2+): Cys-60, Cys-62, Cys-77, and Cys-80. Mg(2+) contacts are provided by Asp-503, Asp-505, and Asp-507. Zn(2+)-binding residues include Cys-875, Cys-950, Cys-957, and Cys-960.

This sequence belongs to the RNA polymerase beta' chain family. In terms of assembly, the RNAP catalytic core consists of 2 alpha, 1 beta, 1 beta' and 1 omega subunit. When a sigma factor is associated with the core the holoenzyme is formed, which can initiate transcription. Mg(2+) is required as a cofactor. Zn(2+) serves as cofactor.

The enzyme catalyses RNA(n) + a ribonucleoside 5'-triphosphate = RNA(n+1) + diphosphate. In terms of biological role, DNA-dependent RNA polymerase catalyzes the transcription of DNA into RNA using the four ribonucleoside triphosphates as substrates. The chain is DNA-directed RNA polymerase subunit beta' from Mycoplasma mycoides subsp. mycoides SC (strain CCUG 32753 / NCTC 10114 / PG1).